The sequence spans 643 residues: Threonine--tRNA ligase (643 aa).

In terms of domain architecture, TGS spans 1 to 61 (MVAISLPDGS…TTDASVSLIT (61 aa)). The segment at 243 to 534 (DHRRVGQEMD…LIENCAGRFP (292 aa)) is catalytic. 3 residues coordinate Zn(2+): Cys334, His385, and His511.

The protein belongs to the class-II aminoacyl-tRNA synthetase family. Homodimer. Zn(2+) is required as a cofactor.

The protein resides in the cytoplasm. The catalysed reaction is tRNA(Thr) + L-threonine + ATP = L-threonyl-tRNA(Thr) + AMP + diphosphate + H(+). In terms of biological role, catalyzes the attachment of threonine to tRNA(Thr) in a two-step reaction: L-threonine is first activated by ATP to form Thr-AMP and then transferred to the acceptor end of tRNA(Thr). Also edits incorrectly charged L-seryl-tRNA(Thr). In Rhodospirillum rubrum (strain ATCC 11170 / ATH 1.1.1 / DSM 467 / LMG 4362 / NCIMB 8255 / S1), this protein is Threonine--tRNA ligase.